The sequence spans 64 residues: MGMRMMFTMFLLVVLTTTVVSFNSDRESNHENRRTSNQITRGMWDECCDDPPCRQNNMEHCPAS.

The signal sequence occupies residues 1–21 (MGMRMMFTMFLLVVLTTTVVS). Residues 22 to 41 (FNSDRESNHENRRTSNQITR) constitute a propeptide that is removed on maturation. Disulfide bonds link Cys47-Cys53 and Cys48-Cys61. Residues 49 to 51 (DDP) are lacks the Ser-Xaa-Pro motif that is crucial for potent interaction with nAChR.

The protein belongs to the conotoxin A superfamily. Expressed by the venom duct.

It localises to the secreted. In terms of biological role, alpha-conotoxins act on postsynaptic membranes, they bind to the nicotinic acetylcholine receptors (nAChR) and thus inhibit them. Has possibly a distinct nAChR binding mode from other alpha-conotoxins, due to a different three residue motif (lacks the Ser-Xaa-Pro motif). This chain is Alpha-conotoxin-like Lp1.7, found in Conus leopardus (Leopard cone).